The following is a 132-amino-acid chain: Small ribosomal subunit protein uS8 (132 aa).

It belongs to the universal ribosomal protein uS8 family. As to quaternary structure, part of the 30S ribosomal subunit. Contacts proteins S5 and S12.

In terms of biological role, one of the primary rRNA binding proteins, it binds directly to 16S rRNA central domain where it helps coordinate assembly of the platform of the 30S subunit. In Brucella ovis (strain ATCC 25840 / 63/290 / NCTC 10512), this protein is Small ribosomal subunit protein uS8.